Reading from the N-terminus, the 265-residue chain is 3-methyl-2-oxobutanoate hydroxymethyltransferase (265 aa).

The Mg(2+) site is built by Asp-41 and Asp-80. 3-methyl-2-oxobutanoate is bound by residues 41 to 42 (DS), Asp-80, and Lys-109. Residue Glu-111 participates in Mg(2+) binding. Catalysis depends on Glu-178, which acts as the Proton acceptor.

It belongs to the PanB family. In terms of assembly, homodecamer; pentamer of dimers. The cofactor is Mg(2+).

It is found in the cytoplasm. The catalysed reaction is 3-methyl-2-oxobutanoate + (6R)-5,10-methylene-5,6,7,8-tetrahydrofolate + H2O = 2-dehydropantoate + (6S)-5,6,7,8-tetrahydrofolate. Its pathway is cofactor biosynthesis; (R)-pantothenate biosynthesis; (R)-pantoate from 3-methyl-2-oxobutanoate: step 1/2. Catalyzes the reversible reaction in which hydroxymethyl group from 5,10-methylenetetrahydrofolate is transferred onto alpha-ketoisovalerate to form ketopantoate. In Thermosipho africanus (strain TCF52B), this protein is 3-methyl-2-oxobutanoate hydroxymethyltransferase.